A 479-amino-acid chain; its full sequence is Glycogen synthase (479 aa).

ADP-alpha-D-glucose is bound at residue K15.

It belongs to the glycosyltransferase 1 family. Bacterial/plant glycogen synthase subfamily.

It catalyses the reaction [(1-&gt;4)-alpha-D-glucosyl](n) + ADP-alpha-D-glucose = [(1-&gt;4)-alpha-D-glucosyl](n+1) + ADP + H(+). The protein operates within glycan biosynthesis; glycogen biosynthesis. Functionally, synthesizes alpha-1,4-glucan chains using ADP-glucose. This is Glycogen synthase from Pectobacterium carotovorum subsp. carotovorum (strain PC1).